The chain runs to 177 residues: Adenine phosphoribosyltransferase (177 aa).

The protein belongs to the purine/pyrimidine phosphoribosyltransferase family. Homodimer.

Its subcellular location is the cytoplasm. The enzyme catalyses AMP + diphosphate = 5-phospho-alpha-D-ribose 1-diphosphate + adenine. The protein operates within purine metabolism; AMP biosynthesis via salvage pathway; AMP from adenine: step 1/1. In terms of biological role, catalyzes a salvage reaction resulting in the formation of AMP, that is energically less costly than de novo synthesis. The polypeptide is Adenine phosphoribosyltransferase (Synechococcus sp. (strain RCC307)).